A 626-amino-acid chain; its full sequence is Alpha terpineol synthase, chloroplastic (626 aa).

The N-terminal 38 residues, 1–38 (MALLSVAPLASKSRLHKTLITSAHHLKPSPTTIPTLPV), are a transit peptide targeting the chloroplast. Positions 377, 381, and 529 each coordinate Mg(2+). The DDXXD motif motif lies at 377–381 (DDIYD).

The protein belongs to the terpene synthase family. Tpsd subfamily. Mg(2+) is required as a cofactor. The cofactor is Mn(2+).

The protein localises to the plastid. It localises to the chloroplast. The catalysed reaction is (2E)-geranyl diphosphate + H2O = (S)-alpha-terpineol + diphosphate. It catalyses the reaction (2E)-geranyl diphosphate + H2O = (R)-alpha-terpineol + diphosphate. It carries out the reaction (2E)-geranyl diphosphate + H2O = (2E)-geraniol + diphosphate. The enzyme catalyses (2E)-geranyl diphosphate = terpinolene + diphosphate. The catalysed reaction is (2E)-geranyl diphosphate = (4S)-limonene + diphosphate. It functions in the pathway terpene metabolism; oleoresin biosynthesis. The protein operates within secondary metabolite biosynthesis; terpenoid biosynthesis. Monoterpene synthase (TPS) involved in the biosynthesis of monoterpene natural products included in conifer oleoresin secretions and volatile emissions; these compounds contribute to biotic and abiotic stress defense against herbivores and pathogens. Catalyzes the conversion of (2E)-geranyl diphosphate (GPP) to (-)-alpha-terpineol, (+)-alpha-terpineol and terpin-4-ol, and, to a lower extent, to geraniol, terpinolene and (-)-limonene. This chain is Alpha terpineol synthase, chloroplastic, found in Pinus banksiana (Jack pine).